A 259-amino-acid polypeptide reads, in one-letter code: Sphinganine C4-monooxygenase 2 (259 aa).

Transmembrane regions (helical) follow at residues 10-30 (FLGTFVPILVYWVYSGMYICL), 54-74 (AVVKGVLLQQTLQAIISVILF), and 91-111 (ILLLARQFIIAMLVIDTWQYF). Residues 98-234 (FIIAMLVIDT…FVMWDRILGT (137 aa)) enclose the Fatty acid hydroxylase domain. The short motif at 113 to 117 (HRYMH) is the Histidine box-1 element. The short motif at 127 to 131 (HSQHH) is the Histidine box-2 element. The Histidine box-3 signature appears at 206–212 (YHDVHHQ).

It belongs to the sterol desaturase family. Fe cation serves as cofactor. In terms of tissue distribution, ubiquitous, with higher levels in flowers and roots.

It is found in the endoplasmic reticulum membrane. It catalyses the reaction a dihydroceramide + 2 Fe(II)-[cytochrome b5] + O2 + 2 H(+) = a phytoceramide + 2 Fe(III)-[cytochrome b5] + H2O. It participates in membrane lipid metabolism; sphingolipid biosynthesis. Functionally, involved in sphingolipid trihydroxy long-chain base (4-hydroxysphinganine) biosynthesis. Can use C18- and C20-sphinganine as substrates to produce C18- and C20-phytosphinganines (D-ribo-2-amino-1,3,4-trihydroxyoctadecane and -eicosane). The polypeptide is Sphinganine C4-monooxygenase 2 (SBH2) (Arabidopsis thaliana (Mouse-ear cress)).